The chain runs to 490 residues: Protoporphyrinogen oxidase (490 aa).

FAD is bound by residues 7-12, 32-33, Trp-40, 61-64, and 466-468; these read GGGIAG, EK, GPRT, and VSI.

The protein belongs to the protoporphyrinogen/coproporphyrinogen oxidase family. Protoporphyrinogen oxidase subfamily. FAD is required as a cofactor.

The protein localises to the mitochondrion. The enzyme catalyses protoporphyrinogen IX + 3 O2 = protoporphyrin IX + 3 H2O2. The protein operates within porphyrin-containing compound metabolism; protoporphyrin-IX biosynthesis; protoporphyrin-IX from protoporphyrinogen-IX: step 1/1. In terms of biological role, catalyzes the 6-electron oxidation of protoporphyrinogen-IX to form protoporphyrin-IX. This chain is Protoporphyrinogen oxidase (hem14), found in Schizosaccharomyces pombe (strain 972 / ATCC 24843) (Fission yeast).